We begin with the raw amino-acid sequence, 252 residues long: Imidazole glycerol phosphate synthase subunit HisF (252 aa).

Residues Asp11 and Asp130 contribute to the active site.

It belongs to the HisA/HisF family. In terms of assembly, heterodimer of HisH and HisF.

It localises to the cytoplasm. The enzyme catalyses 5-[(5-phospho-1-deoxy-D-ribulos-1-ylimino)methylamino]-1-(5-phospho-beta-D-ribosyl)imidazole-4-carboxamide + L-glutamine = D-erythro-1-(imidazol-4-yl)glycerol 3-phosphate + 5-amino-1-(5-phospho-beta-D-ribosyl)imidazole-4-carboxamide + L-glutamate + H(+). The protein operates within amino-acid biosynthesis; L-histidine biosynthesis; L-histidine from 5-phospho-alpha-D-ribose 1-diphosphate: step 5/9. Functionally, IGPS catalyzes the conversion of PRFAR and glutamine to IGP, AICAR and glutamate. The HisF subunit catalyzes the cyclization activity that produces IGP and AICAR from PRFAR using the ammonia provided by the HisH subunit. The sequence is that of Imidazole glycerol phosphate synthase subunit HisF from Staphylococcus aureus (strain bovine RF122 / ET3-1).